A 117-amino-acid polypeptide reads, in one-letter code: Movement and RNA silencing protein (117 aa).

The chain crosses the membrane as a helical span at residues 15 to 35 (FLFFGAIFIAITILYILLVLL). The tract at residues 83 to 117 (RDQEPAVIPHVSQVIPSQPNRRDDQGRRGNAGPMF) is disordered.

It localises to the host cell membrane. In terms of biological role, transports viral genome to neighboring plant cells directly through plasmosdesmata, without any budding. The movement protein allows efficient cell to cell propagation, by bypassing the host cell wall barrier. Begomovirus genome is shuttled out of nucleus by Nuclear shuttle protein (NSP) and the movement protein transports the DNA-NSP complex to cell plasmodesmata and facilitates further movement across the cell wall. Acts as a suppressor of RNA-mediated gene silencing, also known as post-transcriptional gene silencing (PTGS), a mechanism of plant viral defense that limits the accumulation of viral RNAs. This is Movement and RNA silencing protein (DNA-M) from Banana bunchy top virus (isolate Autralia) (BBTV).